Consider the following 464-residue polypeptide: Bifunctional protein GlmU (464 aa).

Positions 1–236 (MRAVILAAGL…PTEALGVNTR (236 aa)) are pyrophosphorylase. Residues 6–9 (LAAG), Lys20, and 77–78 (GT) contribute to the UDP-N-acetyl-alpha-D-glucosamine site. Residue Asp102 coordinates Mg(2+). Positions 145, 161, 176, and 234 each coordinate UDP-N-acetyl-alpha-D-glucosamine. Residue Asn234 participates in Mg(2+) binding. A linker region spans residues 237-257 (WDLALVENVIKLKIARYWAER). Residues 258–464 (GVTVHYPETV…GRGKKKLQKD (207 aa)) are N-acetyltransferase. Residues Arg340 and Lys358 each coordinate UDP-N-acetyl-alpha-D-glucosamine. Residue His370 is the Proton acceptor of the active site. UDP-N-acetyl-alpha-D-glucosamine-binding residues include Tyr373 and Asn384. Acetyl-CoA-binding positions include Ala387, 393 to 394 (NY), Ser412, Gly430, and Arg447.

It in the N-terminal section; belongs to the N-acetylglucosamine-1-phosphate uridyltransferase family. This sequence in the C-terminal section; belongs to the transferase hexapeptide repeat family. Homotrimer. The cofactor is Mg(2+).

Its subcellular location is the cytoplasm. The catalysed reaction is alpha-D-glucosamine 1-phosphate + acetyl-CoA = N-acetyl-alpha-D-glucosamine 1-phosphate + CoA + H(+). It carries out the reaction N-acetyl-alpha-D-glucosamine 1-phosphate + UTP + H(+) = UDP-N-acetyl-alpha-D-glucosamine + diphosphate. It functions in the pathway nucleotide-sugar biosynthesis; UDP-N-acetyl-alpha-D-glucosamine biosynthesis; N-acetyl-alpha-D-glucosamine 1-phosphate from alpha-D-glucosamine 6-phosphate (route II): step 2/2. It participates in nucleotide-sugar biosynthesis; UDP-N-acetyl-alpha-D-glucosamine biosynthesis; UDP-N-acetyl-alpha-D-glucosamine from N-acetyl-alpha-D-glucosamine 1-phosphate: step 1/1. The protein operates within bacterial outer membrane biogenesis; LPS lipid A biosynthesis. In terms of biological role, catalyzes the last two sequential reactions in the de novo biosynthetic pathway for UDP-N-acetylglucosamine (UDP-GlcNAc). The C-terminal domain catalyzes the transfer of acetyl group from acetyl coenzyme A to glucosamine-1-phosphate (GlcN-1-P) to produce N-acetylglucosamine-1-phosphate (GlcNAc-1-P), which is converted into UDP-GlcNAc by the transfer of uridine 5-monophosphate (from uridine 5-triphosphate), a reaction catalyzed by the N-terminal domain. In Aquifex aeolicus (strain VF5), this protein is Bifunctional protein GlmU.